The primary structure comprises 161 residues: uncharacterized protein (161 aa).

It belongs to the SixA phosphatase family.

This is an uncharacterized protein from Mycobacterium leprae (strain TN).